The sequence spans 240 residues: Probable septum site-determining protein MinC (240 aa).

It belongs to the MinC family. As to quaternary structure, interacts with MinD and FtsZ.

Its function is as follows. Cell division inhibitor that blocks the formation of polar Z ring septums. Rapidly oscillates between the poles of the cell to destabilize FtsZ filaments that have formed before they mature into polar Z rings. Prevents FtsZ polymerization. The protein is Probable septum site-determining protein MinC of Acinetobacter baumannii (strain ATCC 17978 / DSM 105126 / CIP 53.77 / LMG 1025 / NCDC KC755 / 5377).